The chain runs to 105 residues: Small ribosomal subunit protein uS10 (105 aa).

It belongs to the universal ribosomal protein uS10 family. As to quaternary structure, part of the 30S ribosomal subunit.

Its function is as follows. Involved in the binding of tRNA to the ribosomes. The sequence is that of Small ribosomal subunit protein uS10 from Bdellovibrio bacteriovorus (strain ATCC 15356 / DSM 50701 / NCIMB 9529 / HD100).